The following is a 270-amino-acid chain: A-type potassium channel modulatory protein KCNIP2 (270 aa).

Basic and acidic residues predominate over residues 1 to 17; sequence MRGQGRKESLSDSRDLD. The tract at residues 1-32 is disordered; the sequence is MRGQGRKESLSDSRDLDGSYDQLTGHPPGPTK. Ser-9 carries the phosphoserine modification. 2 S-palmitoyl cysteine lipidation sites follow: Cys-45 and Cys-46. The EF-hand 1; degenerate domain maps to 81–137; that stretch reads FELSTVCHRPEGLEQLQEQTKFTRKELQVLYRGFKNECPSGIVNEENFKQIYSQFFP. EF-hand domains are found at residues 140–175, 176–211, and 224–259; these read DSSTYATFLFNAFDTNHDGSVSFEDFVAGLSVILRG, TVDDRLNWAFNLYDLNKDGCITKEEMLDIMKSIYDM, and APREHVESFFQKMDRNKDGVVTIEEFIESCQKDENI. 14 residues coordinate Ca(2+): Asp-153, Asn-155, Asp-157, Ser-159, Asp-164, Asp-189, Asn-191, Asp-193, Cys-195, Glu-200, Asp-237, Asn-239, Asp-241, and Glu-248. Residues 257 to 270 are interaction with KCND2; sequence ENIMRSMQLFDNVI.

This sequence belongs to the recoverin family. As to quaternary structure, component of heteromultimeric potassium channels. Identified in potassium channel complexes containing KCND1, KCND2, KCND3, KCNIP1, KCNIP2, KCNIP3, KCNIP4, DPP6 and DPP10. The KCND2-KCNIP2 channel complex contains four KCND2 and four KCNIP2 subunits. Interacts with KCND2. Probably part of a complex consisting of KCNIP1, KCNIP2 isoform 3 and KCND2. At least isoform 2 and isoform 3 can self-associate to form homodimers and homotetramers. Isoform 3 interacts with KCNIP1 in a calcium-dependent manner. Interacts with KCND3; each KCNIP2 monomer interacts with two adjacent KCND3 subunits, through both the N-terminal inactivation ball of a KCND3 subunit and a C-terminal helix from the adjacent KCND3 subunit, clamping them together; this interaction modulates the channel gating kinetics. In terms of processing, palmitoylated. Palmitoylation enhances association with the plasma membrane. Expressed in brain. Colocalizes with KCND2 in excitatory neurons including cortical and hippocampal CA1 pyramidal cells. Isoform 3 is expressed in heart and in umbilical vein endothelial cells. Not expressed in fetal heart.

Its subcellular location is the cell membrane. Functionally, regulatory subunit of Kv4/D (Shal)-type voltage-gated rapidly inactivating A-type potassium channels. Modulates channel density, inactivation kinetics and rate of recovery from inactivation in a calcium-dependent and isoform-specific manner. Involved in KCND2 and KCND3 trafficking to the cell surface. May be required for the expression of I(To) currents in the heart. This is A-type potassium channel modulatory protein KCNIP2 from Homo sapiens (Human).